Here is a 494-residue protein sequence, read N- to C-terminus: Cysteine--tRNA ligase (494 aa).

C29 serves as a coordination point for Zn(2+). Positions 31–41 match the 'HIGH' region motif; that stretch reads VTVYDHCHIGH. Zn(2+)-binding residues include C209, H234, and E238. The 'KMSKS' region motif lies at 266–270; it reads KMSKS. K269 contributes to the ATP binding site.

The protein belongs to the class-I aminoacyl-tRNA synthetase family. Monomer. Zn(2+) is required as a cofactor.

It is found in the cytoplasm. It catalyses the reaction tRNA(Cys) + L-cysteine + ATP = L-cysteinyl-tRNA(Cys) + AMP + diphosphate. The chain is Cysteine--tRNA ligase from Geotalea daltonii (strain DSM 22248 / JCM 15807 / FRC-32) (Geobacter daltonii).